Reading from the N-terminus, the 422-residue chain is Histidine--tRNA ligase (422 aa).

This sequence belongs to the class-II aminoacyl-tRNA synthetase family. In terms of assembly, homodimer.

It localises to the cytoplasm. It carries out the reaction tRNA(His) + L-histidine + ATP = L-histidyl-tRNA(His) + AMP + diphosphate + H(+). The chain is Histidine--tRNA ligase from Onion yellows phytoplasma (strain OY-M).